Consider the following 564-residue polypeptide: Carbamoyl phosphate synthase large chain, N-terminal section (564 aa).

A carboxyphosphate synthetic domain region spans residues 1 to 399; sequence MPETPNKVLI…ALQKAIRSLE (399 aa). ATP is bound by residues R127, R167, G173, G174, E206, V208, E213, G239, V240, H241, Q282, and E296. Positions 131–325 constitute an ATP-grasp domain; sequence RAFMKKIGEP…IARIAAKIAI (195 aa). Residues Q282, E296, and N298 each coordinate Mg(2+). Residues Q282, E296, and N298 each contribute to the Mn(2+) site. Residues 400-560 are oligomerization domain; the sequence is IGEPGLGPSP…YSTYEEECEA (161 aa).

The protein belongs to the CarB family. As to quaternary structure, composed of two chains; the small (or glutamine) chain promotes the hydrolysis of glutamine to ammonia, which is used by the large (or ammonia) chain to synthesize carbamoyl phosphate. Tetramer of heterodimers (alpha,beta)4. It depends on Mg(2+) as a cofactor. The cofactor is Mn(2+).

The catalysed reaction is hydrogencarbonate + L-glutamine + 2 ATP + H2O = carbamoyl phosphate + L-glutamate + 2 ADP + phosphate + 2 H(+). The enzyme catalyses hydrogencarbonate + NH4(+) + 2 ATP = carbamoyl phosphate + 2 ADP + phosphate + 2 H(+). The protein operates within amino-acid biosynthesis; L-arginine biosynthesis; carbamoyl phosphate from bicarbonate: step 1/1. It participates in pyrimidine metabolism; UMP biosynthesis via de novo pathway; (S)-dihydroorotate from bicarbonate: step 1/3. In terms of biological role, large subunit of the glutamine-dependent carbamoyl phosphate synthetase (CPSase). CPSase catalyzes the formation of carbamoyl phosphate from the ammonia moiety of glutamine, carbonate, and phosphate donated by ATP, constituting the first step of 2 biosynthetic pathways, one leading to arginine and/or urea and the other to pyrimidine nucleotides. The large subunit (synthetase) binds the substrates ammonia (free or transferred from glutamine from the small subunit), hydrogencarbonate and ATP and carries out an ATP-coupled ligase reaction, activating hydrogencarbonate by forming carboxy phosphate which reacts with ammonia to form carbamoyl phosphate. This is Carbamoyl phosphate synthase large chain, N-terminal section (carB1) from Methanopyrus kandleri (strain AV19 / DSM 6324 / JCM 9639 / NBRC 100938).